We begin with the raw amino-acid sequence, 185 residues long: Ribosome-recycling factor (185 aa).

The disordered stretch occupies residues 137-158 (NQVKKLEKDKEISEDESKKAQE). The segment covering 140–158 (KKLEKDKEISEDESKKAQE) has biased composition (basic and acidic residues).

It belongs to the RRF family.

Its subcellular location is the cytoplasm. Responsible for the release of ribosomes from messenger RNA at the termination of protein biosynthesis. May increase the efficiency of translation by recycling ribosomes from one round of translation to another. The protein is Ribosome-recycling factor of Helicobacter pylori (strain P12).